Reading from the N-terminus, the 644-residue chain is Biosynthetic arginine decarboxylase (644 aa).

Position 113 is an N6-(pyridoxal phosphate)lysine (K113). Residue 293–303 (FDVGGGLGVDY) coordinates substrate.

This sequence belongs to the Orn/Lys/Arg decarboxylase class-II family. SpeA subfamily. Mg(2+) serves as cofactor. Pyridoxal 5'-phosphate is required as a cofactor.

The catalysed reaction is L-arginine + H(+) = agmatine + CO2. Functionally, catalyzes the biosynthesis of agmatine from arginine. In Pasteurella multocida (strain Pm70), this protein is Biosynthetic arginine decarboxylase.